Here is a 328-residue protein sequence, read N- to C-terminus: tRNA uridine(34) hydroxylase (328 aa).

Residues 130–224 (LDEDTVVLDT…YGKDPEVQGE (95 aa)) form the Rhodanese domain. The active-site Cysteine persulfide intermediate is cysteine 184.

It belongs to the TrhO family.

It catalyses the reaction uridine(34) in tRNA + AH2 + O2 = 5-hydroxyuridine(34) in tRNA + A + H2O. Functionally, catalyzes oxygen-dependent 5-hydroxyuridine (ho5U) modification at position 34 in tRNAs. This chain is tRNA uridine(34) hydroxylase, found in Streptococcus pyogenes serotype M6 (strain ATCC BAA-946 / MGAS10394).